We begin with the raw amino-acid sequence, 132 residues long: Homeobox protein HD-4 (132 aa).

Positions G29–A88 form a DNA-binding region, homeobox. The segment at S82–A101 is disordered.

Its subcellular location is the nucleus. The protein is Homeobox protein HD-4 (HD-4) of Encephalitozoon cuniculi (strain GB-M1) (Microsporidian parasite).